The primary structure comprises 671 residues: DNA ligase (671 aa).

NAD(+)-binding positions include 32–36 (DAEYD), 81–82 (SL), and E113. K115 functions as the N6-AMP-lysine intermediate in the catalytic mechanism. R136, E173, K290, and K314 together coordinate NAD(+). Residues C408, C411, C426, and C432 each coordinate Zn(2+). The region spanning 593-671 (EIDSPFAGKT…EAEMLRLLGS (79 aa)) is the BRCT domain.

The protein belongs to the NAD-dependent DNA ligase family. LigA subfamily. It depends on Mg(2+) as a cofactor. The cofactor is Mn(2+).

It catalyses the reaction NAD(+) + (deoxyribonucleotide)n-3'-hydroxyl + 5'-phospho-(deoxyribonucleotide)m = (deoxyribonucleotide)n+m + AMP + beta-nicotinamide D-nucleotide.. In terms of biological role, DNA ligase that catalyzes the formation of phosphodiester linkages between 5'-phosphoryl and 3'-hydroxyl groups in double-stranded DNA using NAD as a coenzyme and as the energy source for the reaction. It is essential for DNA replication and repair of damaged DNA. The protein is DNA ligase of Shigella dysenteriae serotype 1 (strain Sd197).